A 103-amino-acid chain; its full sequence is Large ribosomal subunit protein bL21 (103 aa).

Belongs to the bacterial ribosomal protein bL21 family. In terms of assembly, part of the 50S ribosomal subunit. Contacts protein L20.

In terms of biological role, this protein binds to 23S rRNA in the presence of protein L20. This Dechloromonas aromatica (strain RCB) protein is Large ribosomal subunit protein bL21.